A 389-amino-acid polypeptide reads, in one-letter code: Chitinase-3-like protein 1 (389 aa).

The signal sequence occupies residues 1 to 29 (MHTSTEARMGMRAALTGFAVLMLLQSCSA). The GH18 domain occupies 30-389 (YKLVCYFTSW…LTNAIKDALA (360 aa)). A disulfide bridge links Cys34 with Cys59. N-linked (GlcNAc...) asparagine glycosylation occurs at Asn68. Chitin contacts are provided by residues 79-80 (EW), 106-109 (GGWK), Tyr150, and 213-216 (MTYD). The cysteines at positions 309 and 372 are disulfide-linked. An important for AKT1 activation and IL8 production region spans residues 333-347 (QWVGYEDKESVKNKV). Position 361 (Trp361) interacts with chitin.

The protein belongs to the glycosyl hydrolase 18 family. As to quaternary structure, monomer. In terms of tissue distribution, detected in lung in pulmonary macrophages and alveolar type 2 cells and in bronchoalveolar lavage (BAL) fluids. Expressed in mammary tumor cells (at protein level). Expressed in lung. Not detected in non-inflammatory colon.

It is found in the secreted. The protein localises to the extracellular space. Its subcellular location is the cytoplasm. The protein resides in the endoplasmic reticulum. Carbohydrate-binding lectin with a preference for chitin. Has no chitinase activity. May play a role in tissue remodeling and in the capacity of cells to respond to and cope with changes in their environment. Plays a role in T-helper cell type 2 (Th2) inflammatory response and IL-13-induced inflammation, regulating allergen sensitization, inflammatory cell apoptosis, dendritic cell accumulation and M2 macrophage differentiation. Facilitates invasion of pathogenic enteric bacteria into colonic mucosa and lymphoid organs. Mediates activation of AKT1 signaling pathway and subsequent IL8 production in colonic epithelial cells. Regulates antibacterial responses in lung by contributing to macrophage bacterial killing, controlling bacterial dissemination and augmenting host tolerance. Also regulates hyperoxia-induced injury, inflammation and epithelial apoptosis in lung. The polypeptide is Chitinase-3-like protein 1 (Chi3l1) (Mus musculus (Mouse)).